The sequence spans 379 residues: Cytochrome b (379 aa).

4 helical membrane-spanning segments follow: residues 33–53, 77–98, 113–133, and 178–198; these read FGSLLGACLTIQIITGLFLAM, WTIRYLHANGASLFFLCLFIHV, WNIGIMLLFSVMATAFMGYVL, and FFALHFILPFIISALTMIHLL. 2 residues coordinate heme b: H83 and H97. The heme b site is built by H182 and H196. H201 lines the a ubiquinone pocket. Helical transmembrane passes span 226–246, 288–308, 320–340, and 347–367; these read TKDFLGLLLLILLLMTLTLFY, LGGVVALIMSILILAIMPFLQ, LSQFLFWILVADLLTLTWIGG, and FINIGQMASILYFSLMVFIMP.

This sequence belongs to the cytochrome b family. In terms of assembly, the cytochrome bc1 complex contains 11 subunits: 3 respiratory subunits (MT-CYB, CYC1 and UQCRFS1), 2 core proteins (UQCRC1 and UQCRC2) and 6 low-molecular weight proteins (UQCRH/QCR6, UQCRB/QCR7, UQCRQ/QCR8, UQCR10/QCR9, UQCR11/QCR10 and a cleavage product of UQCRFS1). This cytochrome bc1 complex then forms a dimer. The cofactor is heme b.

Its subcellular location is the mitochondrion inner membrane. In terms of biological role, component of the ubiquinol-cytochrome c reductase complex (complex III or cytochrome b-c1 complex) that is part of the mitochondrial respiratory chain. The b-c1 complex mediates electron transfer from ubiquinol to cytochrome c. Contributes to the generation of a proton gradient across the mitochondrial membrane that is then used for ATP synthesis. This is Cytochrome b (MT-CYB) from Lepilemur aeeclis (Sportive lemur).